The primary structure comprises 51 residues: Proteinase inhibitor PTI (51 aa).

Disulfide bonds link Cys3–Cys40, Cys6–Cys24, Cys7–Cys36, and Cys13–Cys49.

The protein belongs to the protease inhibitor I20 (potato type II proteinase inhibitor) family.

The protein resides in the secreted. The protein is Proteinase inhibitor PTI of Solanum tuberosum (Potato).